The sequence spans 334 residues: Methionyl-tRNA formyltransferase (334 aa).

A (6S)-5,6,7,8-tetrahydrofolate-binding site is contributed by 111–114; that stretch reads SLLP.

This sequence belongs to the Fmt family.

It carries out the reaction L-methionyl-tRNA(fMet) + (6R)-10-formyltetrahydrofolate = N-formyl-L-methionyl-tRNA(fMet) + (6S)-5,6,7,8-tetrahydrofolate + H(+). Functionally, attaches a formyl group to the free amino group of methionyl-tRNA(fMet). The formyl group appears to play a dual role in the initiator identity of N-formylmethionyl-tRNA by promoting its recognition by IF2 and preventing the misappropriation of this tRNA by the elongation apparatus. This Cyanothece sp. (strain PCC 7425 / ATCC 29141) protein is Methionyl-tRNA formyltransferase.